A 149-amino-acid chain; its full sequence is uncharacterized protein (149 aa).

Residues 1–149 (MNIRQAKTSD…VHYCLNVPAK (149 aa)) enclose the N-acetyltransferase domain.

The protein belongs to the acetyltransferase family.

This is an uncharacterized protein from Bacillus subtilis (strain 168).